Here is a 404-residue protein sequence, read N- to C-terminus: Ubiquitin-like modifier-activating enzyme 5 (404 aa).

Position 45 is a phosphoserine (S45). 5 residues coordinate ATP: G83, D104, K127, N150, and N184. Residues C226 and C229 each contribute to the Zn(2+) site. Residue C250 is the Glycyl thioester intermediate of the active site. Positions 303 and 308 each coordinate Zn(2+). Residues 334-346 carry the UFM1-interacting sequence (UIS) motif; that stretch reads IIHEDNEWGIELV. Residues 347–377 form a linker region; sequence SEVSEEELKNFSGPVPDLPEGITVAYTIPKK. Phosphoserine occurs at positions 358 and 393. The UFC1-binding sequence (UFC) signature appears at 389-404; sequence DSGESLEDLMAKMKNM.

Belongs to the ubiquitin-activating E1 family. UBA5 subfamily. As to quaternary structure, homodimer; homodimerization is required for UFM1 activation. Interacts (via UIS motif) with UFM1; binds UFM1 via a trans-binding mechanism in which UFM1 interacts with distinct sites in both subunits of the UBA5 homodimer. Interacts (via C-terminus) with UFC1. Interacts (via UIS motif) with GABARAPL2 and, with lower affinity, with GABARAP and GABARAPL1. In terms of tissue distribution, widely expressed.

Its subcellular location is the cytoplasm. The protein localises to the nucleus. It is found in the endoplasmic reticulum membrane. It localises to the golgi apparatus. E1-like enzyme which specifically catalyzes the first step in ufmylation. Activates UFM1 by first adenylating its C-terminal glycine residue with ATP, and thereafter linking this residue to the side chain of a cysteine residue in E1, yielding a UFM1-E1 thioester and free AMP. Activates UFM1 via a trans-binding mechanism, in which UFM1 interacts with distinct sites in both subunits of the UBA5 homodimer. Trans-binding also promotes stabilization of the UBA5 homodimer, and enhances ATP-binding. Transfer of UFM1 from UBA5 to the E2-like enzyme UFC1 also takes place using a trans mechanism. Ufmylation plays a key role in various processes, such as ribosome recycling, response to DNA damage, interferon response or reticulophagy (also called ER-phagy). Ufmylation is essential for erythroid differentiation of both megakaryocytes and erythrocytes. This Homo sapiens (Human) protein is Ubiquitin-like modifier-activating enzyme 5.